A 430-amino-acid chain; its full sequence is MRTDWNFFFCILLQAIFVVGTQTSRTLVLYDQSTEPLEEYSVYLKDLEQRNYKLEYLDINSTSTTVDLYDKEQRLFDNIIVFPTKGGKNLARQIPVKQLIKFFENEGNILCMSSPGAVPNTIRLFLNELGIYPSPKGHVIRDYFSPSSEELVVSSNHLLNKYVYNARKSEDFVFGESSAALLENREQIVPILNAPRTSFTESKGKCNSWTSGSQGFLVVGFQNLNNARLVWIGSSDFLKNKNQDSNQEFAKELLKWTFNEKSVIKSVHAVHSHADGTSYDEEPYKIKDKVIYSVGFSEWNGEEWLPHIADDIQFELRQVDPYYRLTLSPSGNDSETQYYTTGEFILPDRHGVFTFLTDYRKIGLSFTTDKDVKAIRHLANDEYPRSWEISNSWVYISAICGVIVAWIFFVVSFVTTSSVGKKLETFKKTN.

The signal sequence occupies residues 1–20 (MRTDWNFFFCILLQAIFVVG). Residues 24–393 (SRTLVLYDQS…PRSWEISNSW (370 aa)) lie on the Lumenal side of the membrane. Residues Asn60 and Asn332 are each glycosylated (N-linked (GlcNAc...) asparagine). The helical transmembrane segment at 394-414 (VYISAICGVIVAWIFFVVSFV) threads the bilayer. Residues 415–430 (TTSSVGKKLETFKKTN) lie on the Cytoplasmic side of the membrane.

Belongs to the DDOST 48 kDa subunit family. Component of the oligosaccharyltransferase (OST) complex, which appears to exist in two assemblies comprising OST1, OST2, OST4, OST5, STT3, SWP1, WPB1, and either OST3 or OST6. OST assembly occurs through the formation of 3 subcomplexes. Subcomplex 1 contains OST1 and OST5, subcomplex 2 contains STT3, OST3, and OST4, and subcomplex 3 contains OST2, WBP1, and SWP1. Interacts with SEC61, SBH1 and SSS1.

The protein localises to the endoplasmic reticulum membrane. It functions in the pathway protein modification; protein glycosylation. In terms of biological role, subunit of the oligosaccharyl transferase (OST) complex that catalyzes the initial transfer of a defined glycan (Glc(3)Man(9)GlcNAc(2) in eukaryotes) from the lipid carrier dolichol-pyrophosphate to an asparagine residue within an Asn-X-Ser/Thr consensus motif in nascent polypeptide chains, the first step in protein N-glycosylation. N-glycosylation occurs cotranslationally and the complex associates with the Sec61 complex at the channel-forming translocon complex that mediates protein translocation across the endoplasmic reticulum (ER). All subunits are required for a maximal enzyme activity. This chain is Dolichyl-diphosphooligosaccharide--protein glycosyltransferase subunit WBP1 (WBP1), found in Saccharomyces cerevisiae (strain ATCC 204508 / S288c) (Baker's yeast).